The primary structure comprises 487 residues: Cytochrome P450 716A75 (487 aa).

Residues 5–25 form a helical membrane-spanning segment; the sequence is FVSLLSLFLLILLPLSLLFLF. C434 contacts heme.

It belongs to the cytochrome P450 family. It depends on heme as a cofactor.

Its subcellular location is the membrane. It carries out the reaction beta-amyrin + reduced [NADPH--hemoprotein reductase] + O2 = erythrodiol + oxidized [NADPH--hemoprotein reductase] + H2O + H(+). It catalyses the reaction erythrodiol + reduced [NADPH--hemoprotein reductase] + O2 = oleanolic aldehyde + oxidized [NADPH--hemoprotein reductase] + 2 H2O + H(+). The enzyme catalyses oleanolic aldehyde + reduced [NADPH--hemoprotein reductase] + O2 = oleanolate + oxidized [NADPH--hemoprotein reductase] + H2O + 2 H(+). Catalyzes the C-28 oxidation of beta-amyrin to form erythrodiol. Catalyzes the C-28 oxidation of erythrodiol to form oleanolic aldehyde. Catalyzes the C-28 oxidation of oleanolic aldehyde to form oleanolate. This chain is Cytochrome P450 716A75, found in Maesa lanceolata (False assegai).